A 417-amino-acid chain; its full sequence is D-galactonate dehydratase family member Dd703_0947 (417 aa).

His-127 lines the substrate pocket. Tyr-158 acts as the Proton donor/acceptor in catalysis. Asp-223 is a Mg(2+) binding site. His-225 serves as the catalytic Proton donor/acceptor. Residues Glu-249 and Glu-275 each coordinate Mg(2+). Residues Glu-275, Arg-296, His-325, Asp-329, and Glu-352 each contribute to the substrate site.

This sequence belongs to the mandelate racemase/muconate lactonizing enzyme family. GalD subfamily. The cofactor is Mg(2+).

The catalysed reaction is D-mannonate = 2-dehydro-3-deoxy-D-gluconate + H2O. It catalyses the reaction D-gluconate = 2-dehydro-3-deoxy-D-gluconate + H2O. In terms of biological role, has low dehydratase activity with D-mannonate and D-gluconate, suggesting that these are not physiological substrates and that it has no significant role in the in vivo degradation of these compounds. Has no detectable activity with a panel of 70 other acid sugars (in vitro). This is D-galactonate dehydratase family member Dd703_0947 from Musicola paradisiaca (strain Ech703) (Dickeya paradisiaca).